A 147-amino-acid polypeptide reads, in one-letter code: Protein phosphatase 1 regulatory subunit 14A (147 aa).

Residues 1–11 (MAAQRLGKRVL) show a composition bias toward basic residues. Positions 1–37 (MAAQRLGKRVLSKLQSPSRARGPGGSPSGLQKRHARV) are disordered. At serine 26 the chain carries Phosphoserine. The tract at residues 35–120 (ARVTVKYDRR…LLAKLRGLHK (86 aa)) is inhibitory. Phosphothreonine is present on threonine 38. Residues 118–147 (LHKQPGFPQPSPSDDPSLSPRQDPAHTAPP) are disordered. Serine 128, serine 134, and serine 136 each carry phosphoserine.

It belongs to the PP1 inhibitor family.

The protein localises to the cytoplasm. Its function is as follows. Inhibitor of PPP1CA. Has over 1000-fold higher inhibitory activity when phosphorylated, creating a molecular switch for regulating the phosphorylation status of PPP1CA substrates and smooth muscle contraction. This is Protein phosphatase 1 regulatory subunit 14A (Ppp1r14a) from Rattus norvegicus (Rat).